Consider the following 251-residue polypeptide: Octanoyltransferase (251 aa).

A BPL/LPL catalytic domain is found at 49 to 230; the sequence is DEIPDQLLIL…ALDDALAGRL (182 aa). Substrate-binding positions include 87–94, 160–162, and 173–175; these read RGGRITWH, AIG, and GVA. C191 acts as the Acyl-thioester intermediate in catalysis.

The protein belongs to the LipB family.

The protein localises to the cytoplasm. It catalyses the reaction octanoyl-[ACP] + L-lysyl-[protein] = N(6)-octanoyl-L-lysyl-[protein] + holo-[ACP] + H(+). It participates in protein modification; protein lipoylation via endogenous pathway; protein N(6)-(lipoyl)lysine from octanoyl-[acyl-carrier-protein]: step 1/2. In terms of biological role, catalyzes the transfer of endogenously produced octanoic acid from octanoyl-acyl-carrier-protein onto the lipoyl domains of lipoate-dependent enzymes. Lipoyl-ACP can also act as a substrate although octanoyl-ACP is likely to be the physiological substrate. The sequence is that of Octanoyltransferase from Corynebacterium glutamicum (strain R).